The sequence spans 293 residues: Ribosomal RNA small subunit methyltransferase A (293 aa).

S-adenosyl-L-methionine is bound by residues Asn-29, Leu-31, Gly-56, Glu-77, Asp-102, and Asn-127.

This sequence belongs to the class I-like SAM-binding methyltransferase superfamily. rRNA adenine N(6)-methyltransferase family. RsmA subfamily.

The protein localises to the cytoplasm. The catalysed reaction is adenosine(1518)/adenosine(1519) in 16S rRNA + 4 S-adenosyl-L-methionine = N(6)-dimethyladenosine(1518)/N(6)-dimethyladenosine(1519) in 16S rRNA + 4 S-adenosyl-L-homocysteine + 4 H(+). Specifically dimethylates two adjacent adenosines (A1518 and A1519) in the loop of a conserved hairpin near the 3'-end of 16S rRNA in the 30S particle. May play a critical role in biogenesis of 30S subunits. The polypeptide is Ribosomal RNA small subunit methyltransferase A (Geobacillus thermodenitrificans (strain NG80-2)).